A 419-amino-acid polypeptide reads, in one-letter code: Putative competence-damage inducible protein (419 aa).

Belongs to the CinA family.

This is Putative competence-damage inducible protein from Lysinibacillus sphaericus (strain C3-41).